Consider the following 220-residue polypeptide: Ribosomal RNA large subunit methyltransferase E (220 aa).

Residues G60, W62, D92, D108, and D133 each contribute to the S-adenosyl-L-methionine site. K173 serves as the catalytic Proton acceptor.

This sequence belongs to the class I-like SAM-binding methyltransferase superfamily. RNA methyltransferase RlmE family.

The protein resides in the cytoplasm. It catalyses the reaction uridine(2552) in 23S rRNA + S-adenosyl-L-methionine = 2'-O-methyluridine(2552) in 23S rRNA + S-adenosyl-L-homocysteine + H(+). In terms of biological role, specifically methylates the uridine in position 2552 of 23S rRNA at the 2'-O position of the ribose in the fully assembled 50S ribosomal subunit. This chain is Ribosomal RNA large subunit methyltransferase E, found in Paraburkholderia xenovorans (strain LB400).